The primary structure comprises 360 residues: MEYETNFRKKHICSNCGRSGHEFRNCIEPITSYGIINVCISDEYNESMIIKDKFCTKKNTYYRVSSRKHPEISCFISNHIRVRDHENMYKLDNEMIPYRSNEDIHKFCYYKNRILFMMVSRRFSLGFIEFIRGKYDVSDTKSIINLFQHMYEHEIKFINKNRYKYDNILYHFLNRNNEPKKIVLNRIYEGKYSNEYCEAKIKFNMLLNSSNEENNNIPVYLEFYIKHIKPKWKSPEWGFPKGRRDKRSEENMVCACREFEEETGYKKSDYSVLNKIEPIEEKLTGTNGVNYKHIYYLAINNCDINSDLTDYDTYEIGEIKWFTYDEAMARIRPYHIEKKRILTRVYLFILNYLIHNINNT.

Residues 11 to 28 (HICSNCGRSGHEFRNCIE) form a CCHC-type zinc finger. In terms of domain architecture, Nudix hydrolase spans 163–347 (YKYDNILYHF…KKRILTRVYL (185 aa)). The short motif at 242–264 (GRRDKRSEENMVCACREFEEETG) is the Nudix box element. E249 contributes to the Mg(2+) binding site. The Nucleophile role is filled by E258. E262 contacts Mg(2+).

It belongs to the Nudix hydrolase family. DIPP subfamily. Requires Mg(2+) as cofactor. It depends on Mn(2+) as a cofactor.

The catalysed reaction is diphospho-myo-inositol polyphosphate + H2O = myo-inositol polyphosphate + phosphate.. In terms of biological role, might function as a decapping enzyme required for the removal of the 5'-end m7GpppN cap tethered to viral and host mRNAs to allow their decay in cells. In addition to the mRNA cap, probably also efficiently hydrolyzes diphosphoinositol polyphosphates. The polypeptide is Putative mRNA-decapping protein (Acanthamoeba polyphaga (Amoeba)).